The sequence spans 141 residues: Globin, extracellular monomeric (141 aa).

Residues 1–141 (ECDALQRFKV…LGVITGAIHD (141 aa)) form the Globin domain. A disulfide bridge links Cys2 with Cys131. A heme b-binding site is contributed by His94.

This sequence belongs to the globin family. As to quaternary structure, the giant hemoglobins of worms are formed of a monomeric subunit and a disulfide-bonded trimer. This subunit is monomeric.

It localises to the secreted. The protein is Globin, extracellular monomeric of Tubifex tubifex (Sludge worm).